The following is a 337-amino-acid chain: Glyceraldehyde-3-phosphate dehydrogenase 1 (337 aa).

Residues 12–13 (RI), aspartate 34, and arginine 79 contribute to the NAD(+) site. D-glyceraldehyde 3-phosphate is bound by residues 150 to 152 (SCT), threonine 181, 210 to 211 (TG), and arginine 233. The Nucleophile role is filled by cysteine 151. Residue asparagine 315 coordinates NAD(+).

This sequence belongs to the glyceraldehyde-3-phosphate dehydrogenase family. As to quaternary structure, homotetramer.

It localises to the cytoplasm. The catalysed reaction is D-glyceraldehyde 3-phosphate + phosphate + NAD(+) = (2R)-3-phospho-glyceroyl phosphate + NADH + H(+). It functions in the pathway carbohydrate degradation; glycolysis; pyruvate from D-glyceraldehyde 3-phosphate: step 1/5. In Mucor circinelloides f. lusitanicus (Mucor racemosus var. lusitanicus), this protein is Glyceraldehyde-3-phosphate dehydrogenase 1 (GPD1).